A 2248-amino-acid chain; its full sequence is Putative Polycomb group protein ASXL3 (2248 aa).

Positions 10-84 constitute an HTH HARE-type domain; sequence RTWAEAARLA…KSGLYALKKE (75 aa). The tract at residues 156 to 232 is disordered; it reads ALKQALRQQQ…GKQTSQHLKR (77 aa). Over residues 203-216 the composition is skewed to basic and acidic residues; the sequence is KNGEADSSDKEMKH. The segment covering 219-228 has biased composition (polar residues); it reads KSPTGKQTSQ. In terms of domain architecture, DEUBAD spans 254-363; sequence PGSILVNTNL…FERFYGEKLG (110 aa). 11 disordered regions span residues 368-414, 547-583, 607-643, 703-726, 762-853, 869-1052, 1123-1152, 1183-1203, 1431-1462, 1573-1596, and 1990-2068; these read ESVK…PASP, TSSM…EGQF, CISE…CTPA, EASP…PLTS, ERMA…ASIP, LQRT…TGAR, TSKE…ETKM, QQSL…VHSS, KLSA…GFAP, TAPS…ADTT, and LSPN…KRLS. 5 stretches are compositionally biased toward polar residues: residues 371 to 389, 395 to 407, 564 to 580, 607 to 617, and 624 to 643; these read KLTT…SCGT, SAQT…QPKS, AVET…SSLE, CISETSFSSES, and SLPS…CTPA. Polar residues predominate over residues 796-818; sequence NLTSQQKNLSNTPEPIIMSSSSI. Positions 937–949 are enriched in low complexity; sequence SHTSKSSEPSKSP. Composition is skewed to basic and acidic residues over residues 950–968, 975–987, and 997–1008; these read DGIR…KTAE, CKEK…DDQS, and PEKEQPPREEPR. A compositionally biased stretch (polar residues) spans 1036-1046; that stretch reads RASTSTSVSGG. The span at 2016-2046 shows a compositional bias: pro residues; it reads HPPPPPPPPPPPPLALPPPPPPPPPLPPPLP. Residues 2210-2247 form a PHD-type; atypical zinc finger; the sequence is ELKCSCRLKAMIVCKGCGAFCHDDCIGPSKLCVACLVV.

The protein belongs to the Asx family. In terms of assembly, core component of the polycomb repressive deubiquitinase (PR-DUB) complex, at least composed of BAP1, one of ASXL1, ASXL2 or (probably) ASXL3, and one of MBD5 or MBD6. Distinct combinations of ASXL and MBD proteins may preferentially bind specific histone modification marks. The PR-DUB core associates with a number of accessory proteins, including FOXK1, FOXK2, KDM1B, HCFC1 and OGT; KDM1B specifically associates with ASXL2 PR-DUB complexes. Interacts (via PHD domain) with MBD5 and MBD6 (via MBD domain); the interaction is probably direct and mediates association of MBD proteins with the PR-DUB core. In terms of tissue distribution, expressed in pancreatic islets, testis, neuroblastoma, head and neck tumor.

Its subcellular location is the nucleus. Its function is as follows. Putative Polycomb group (PcG) protein. PcG proteins act by forming multiprotein complexes, which are required to maintain the transcriptionally repressive state of homeotic genes throughout development. PcG proteins are not required to initiate repression, but to maintain it during later stages of development. They probably act via methylation of histones, rendering chromatin heritably changed in its expressibility. Non-catalytic component of the PR-DUB complex, a complex that specifically mediates deubiquitination of histone H2A monoubiquitinated at 'Lys-119' (H2AK119ub1). The PR-DUB complex is an epigenetic regulator of gene expression and acts as a transcriptional coactivator, affecting genes involved in development, cell communication, signaling, cell proliferation and cell viability. ASXL1, ASXL2 and ASXL3 function redundantly in the PR-DUB complex and are essential for chromatin recruitment and transcriptional activation of associated genes. The chain is Putative Polycomb group protein ASXL3 (ASXL3) from Homo sapiens (Human).